A 120-amino-acid polypeptide reads, in one-letter code: Large ribosomal subunit protein uL18 (120 aa).

The protein belongs to the universal ribosomal protein uL18 family. As to quaternary structure, part of the 50S ribosomal subunit; part of the 5S rRNA/L5/L18/L25 subcomplex. Contacts the 5S and 23S rRNAs.

This is one of the proteins that bind and probably mediate the attachment of the 5S RNA into the large ribosomal subunit, where it forms part of the central protuberance. The polypeptide is Large ribosomal subunit protein uL18 (Rhodospirillum rubrum (strain ATCC 11170 / ATH 1.1.1 / DSM 467 / LMG 4362 / NCIMB 8255 / S1)).